The primary structure comprises 239 residues: Superoxide dismutase 1 copper chaperone (239 aa).

One can recognise an HMA domain in the interval 7–70 (FYEATYAVPM…ALRDCGRDAI (64 aa)). Cu cation contacts are provided by C18 and C21. C28 and C65 are disulfide-bonded. D163 contacts Zn(2+). Positions 219 and 221 each coordinate Cu cation.

Belongs to the CCS1 family. Requires Cu(2+) as cofactor.

Its subcellular location is the cytoplasm. Its function is as follows. Copper chaperone for superoxide dismutase 1 (SOD1). Binds copper ions and delivers them specifically to SOD1. The protein is Superoxide dismutase 1 copper chaperone (CCS1) of Candida glabrata (strain ATCC 2001 / BCRC 20586 / JCM 3761 / NBRC 0622 / NRRL Y-65 / CBS 138) (Yeast).